A 140-amino-acid chain; its full sequence is MSFASEFKAFALKGNVVDLAVGVIIGAAFGKIVDSIVNDLVMPVVGAIFGGFDFKDYFVALKEIPPGVPHALDAVKKAGVPVFAYGSFLTIVLNFLILAFIIFLMVKQFNRMKRAEPAPAPAAPPEQVVLLREIRDALRR.

The next 2 membrane-spanning stretches (helical) occupy residues 9-29 and 86-106; these read AFAL…GAAF and GSFL…FLMV.

It belongs to the MscL family. As to quaternary structure, homopentamer.

The protein resides in the cell inner membrane. In terms of biological role, channel that opens in response to stretch forces in the membrane lipid bilayer. May participate in the regulation of osmotic pressure changes within the cell. The polypeptide is Large-conductance mechanosensitive channel (Anaeromyxobacter dehalogenans (strain 2CP-1 / ATCC BAA-258)).